Reading from the N-terminus, the 384-residue chain is MKPQQLATQKFSEHYGYSAAQTVFAPGRVNIIGEHTDYNDGFVMPCAINYGMAVSFSKRDDSVWRVYAIDIDEQDEFDLSRPIEPSEHKWANYVRGVVKYIQEKCPEFKQGADLAMTSDVPMSSGLSSSAALEISIGKTAQVLGDLPLGLAEIALIGQQAENKFVGANCGNMDQLTSALGQKDQVIMIDCRSLEITPTPVPHGYSIAIINSNVKHDLVTGEYNSRRQECEFAARFFGVKALRDVTPEQFIERAAELQAENELAYKRAKHIISENQRVLEAVEALKANDMVKLGQLMAGSHDSMRDDFEITIPEIDYLVELAQIAIGKNGGARMTGGGFGGCIVCLVPDGKVEHLRRIIADNYEKQTGIKETFHLCTACDGVHLI.

Residue 34 to 37 coordinates substrate; it reads EHTD. 123 to 129 lines the ATP pocket; sequence SSGLSSS. S129 and E161 together coordinate Mg(2+). D173 acts as the Proton acceptor in catalysis. Y222 serves as a coordination point for substrate.

This sequence belongs to the GHMP kinase family. GalK subfamily.

It is found in the cytoplasm. It catalyses the reaction alpha-D-galactose + ATP = alpha-D-galactose 1-phosphate + ADP + H(+). It functions in the pathway carbohydrate metabolism; galactose metabolism. Catalyzes the transfer of the gamma-phosphate of ATP to D-galactose to form alpha-D-galactose-1-phosphate (Gal-1-P). The protein is Galactokinase of Actinobacillus pleuropneumoniae serotype 5b (strain L20).